Consider the following 447-residue polypeptide: Ribosomal protein uS12 methylthiotransferase RimO (447 aa).

One can recognise an MTTase N-terminal domain in the interval 4 to 114 (PKVGFVSLGC…VMEAVHEYVP (111 aa)). [4Fe-4S] cluster contacts are provided by cysteine 13, cysteine 49, cysteine 78, cysteine 147, cysteine 151, and cysteine 154. The Radical SAM core domain occupies 133-370 (LTPKHYAYLK…MQVQQEISAA (238 aa)). The TRAM domain occupies 373 to 443 (QKRIGQTMTV…EYDLFAKLIQ (71 aa)).

Belongs to the methylthiotransferase family. RimO subfamily. [4Fe-4S] cluster serves as cofactor.

The protein resides in the cytoplasm. It carries out the reaction L-aspartate(89)-[ribosomal protein uS12]-hydrogen + (sulfur carrier)-SH + AH2 + 2 S-adenosyl-L-methionine = 3-methylsulfanyl-L-aspartate(89)-[ribosomal protein uS12]-hydrogen + (sulfur carrier)-H + 5'-deoxyadenosine + L-methionine + A + S-adenosyl-L-homocysteine + 2 H(+). Its function is as follows. Catalyzes the methylthiolation of an aspartic acid residue of ribosomal protein uS12. In Acinetobacter baylyi (strain ATCC 33305 / BD413 / ADP1), this protein is Ribosomal protein uS12 methylthiotransferase RimO.